The chain runs to 271 residues: Sorting nexin-11 (271 aa).

Residues 16–132 (VITVRVQDPR…HLFLQSQLSV (117 aa)) enclose the PX domain. Residues Arg-59, Lys-85, and Arg-99 each coordinate a 1,2-diacyl-sn-glycero-3-phospho-(1D-myo-inositol-3-phosphate). Positions 135–139 (IEACV) are important for membrane trafficking. The disordered stretch occupies residues 185–271 (PRSGRRSSPS…PTQLDTAWDK (87 aa)). The span at 213–230 (SEGPSSESPTLLPSSSLP) shows a compositional bias: low complexity.

This sequence belongs to the sorting nexin family. Monomer. Interacts with TRPV3; this interaction promotes TRPV3 trafficking from the cell membrane to lysosome for degradation.

Its subcellular location is the cell membrane. The protein resides in the endosome. The protein localises to the cytoplasm. Its function is as follows. Phosphoinositide-binding protein involved in protein sorting and membrane trafficking in endosomes. Regulates the levels of TRPV3 by promoting its trafficking from the cell membrane to lysosome for degradation. The chain is Sorting nexin-11 (Snx11) from Mus musculus (Mouse).